The following is a 368-amino-acid chain: Somatostatin receptor type 5 (368 aa).

At 1–45 the chain is on the extracellular side; that stretch reads MEPLFPASPLTTWNTSSVVPSGSGDENGTLAGLGPSPGARAVVVP. Residues Asn-14 and Asn-27 are each glycosylated (N-linked (GlcNAc...) asparagine). The chain crosses the membrane as a helical span at residues 46-66; it reads VLYLLVCAVGLGGNTLVIYVV. Residues 67 to 77 lie on the Cytoplasmic side of the membrane; that stretch reads LRHAKMKTVTN. Residues 78–98 traverse the membrane as a helical segment; sequence IYILNLAVADVLLMLGLPFVA. The Extracellular portion of the chain corresponds to 99–115; it reads TQNAISYWPFGPVLCRL. Cysteines 113 and 188 form a disulfide. The helical transmembrane segment at 116 to 136 threads the bilayer; the sequence is VMTLDGINQFTSIFCLTVMSV. At 137–158 the chain is on the cytoplasmic side; it reads DRYLAVVHPIRSARWRRPRVAK. The chain crosses the membrane as a helical span at residues 159–179; sequence LASAAVWAFSLVMSLPLVVFA. The Extracellular portion of the chain corresponds to 180 to 207; the sequence is DIQEGWNTCNLSWPEPVGLWGAVFIIYT. The N-linked (GlcNAc...) asparagine glycan is linked to Asn-189. The helical transmembrane segment at 208–228 threads the bilayer; the sequence is SVLGFFGPLLVICLCYLLIVV. Over 229-251 the chain is Cytoplasmic; it reads KLKASGVRVGSTRRRSERKVTRM. Residues 252 to 272 form a helical membrane-spanning segment; it reads VVVVVLVFAGCWLPFFIVNIV. The Extracellular segment spans residues 273–286; sequence NLAFALPEEPASAG. A helical transmembrane segment spans residues 287-309; sequence AYFFVVVLSYANSCANPLLYGFL. At 310 to 368 the chain is on the cytoplasmic side; it reads SDNFRQSFRKVLCLRKGYGAGAEDADATEPQPGPSSRLQEAMMPVRSCKANGLMQTSKL. Cys-322 carries the S-palmitoyl cysteine; by ZDHHC5 lipid modification.

It belongs to the G-protein coupled receptor 1 family. Heterodimer with SSTR2. Heterodimerization with SSTR2 increases cell growth inhibition activity of SSTR2. Post-translationally, palmitoylated by ZDHHC5, but not ZDHHC3, nor ZDHHC8. Palmitoylation creates an additional intracellular loop which is thought to be important for efficient coupling to G-proteins and may target the protein to lipid rafts.

The protein resides in the cell membrane. Receptor for somatostatin 28 and to a lesser extent for somatostatin-14. The activity of this receptor is mediated by G proteins which inhibit adenylyl cyclase. Increases cell growth inhibition activity of SSTR2 following heterodimerization. The protein is Somatostatin receptor type 5 (SSTR5) of Bos taurus (Bovine).